A 444-amino-acid polypeptide reads, in one-letter code: Argininosuccinate synthase (444 aa).

ATP contacts are provided by residues 17–25 (AFSGGLDTS) and Ala43. Residue Tyr99 participates in L-citrulline binding. Residues Gly129 and Thr131 each contribute to the ATP site. The L-aspartate site is built by Thr131, Asn135, and Asp136. Position 135 (Asn135) interacts with L-citrulline. Asp136 contributes to the ATP binding site. Residues Arg139 and Ser192 each contribute to the L-citrulline site. Asp194 contributes to the ATP binding site. Residues Thr201, Glu203, and Glu280 each contribute to the L-citrulline site.

It belongs to the argininosuccinate synthase family. Type 2 subfamily. As to quaternary structure, homotetramer.

Its subcellular location is the cytoplasm. It carries out the reaction L-citrulline + L-aspartate + ATP = 2-(N(omega)-L-arginino)succinate + AMP + diphosphate + H(+). It participates in amino-acid biosynthesis; L-arginine biosynthesis; L-arginine from L-ornithine and carbamoyl phosphate: step 2/3. The protein is Argininosuccinate synthase of Burkholderia lata (strain ATCC 17760 / DSM 23089 / LMG 22485 / NCIMB 9086 / R18194 / 383).